Consider the following 128-residue polypeptide: Large ribosomal subunit protein uL22 (128 aa).

This sequence belongs to the universal ribosomal protein uL22 family. As to quaternary structure, part of the 50S ribosomal subunit.

Functionally, this protein binds specifically to 23S rRNA; its binding is stimulated by other ribosomal proteins, e.g. L4, L17, and L20. It is important during the early stages of 50S assembly. It makes multiple contacts with different domains of the 23S rRNA in the assembled 50S subunit and ribosome. In terms of biological role, the globular domain of the protein is located near the polypeptide exit tunnel on the outside of the subunit, while an extended beta-hairpin is found that lines the wall of the exit tunnel in the center of the 70S ribosome. The sequence is that of Large ribosomal subunit protein uL22 from Prochlorococcus marinus (strain MIT 9515).